Here is a 189-residue protein sequence, read N- to C-terminus: MSVISANPWLMLLAIFVINVAYVTCLTVRTILTLKGYRYVAAAVSFIEVLIYIIGLGLVMANLDKFQNIIAYALGFSVGIIVGMKIEEKLALGYSVVNVTTANYELDLPTQLRNLGYGVTHFPAYGRDGERLVMQILTPRRFELKLMDTIKQIDEKAFVIAYEARTLHGGFWVKGVRSKKLKAYDTDEI.

3 consecutive transmembrane segments (helical) span residues 8 to 28, 40 to 60, and 66 to 86; these read PWLM…CLTV, VAAA…GLVM, and FQNI…GMKI.

The protein belongs to the UPF0316 family.

The protein resides in the cell membrane. The sequence is that of UPF0316 protein Sca_1484 from Staphylococcus carnosus (strain TM300).